Consider the following 581-residue polypeptide: Urease subunit alpha (581 aa).

The Urease domain occupies 134-581 (GGFDSHIHFI…LPMTQRYFLF (448 aa)). Ni(2+) is bound by residues His139, His141, and Lys222. Lys222 is modified (N6-carboxylysine). His224 provides a ligand contact to substrate. Residues His251 and His277 each coordinate Ni(2+). Catalysis depends on His325, which acts as the Proton donor. Residue Asp365 coordinates Ni(2+).

This sequence belongs to the metallo-dependent hydrolases superfamily. Urease alpha subunit family. Heterotrimer of UreA (gamma), UreB (beta) and UreC (alpha) subunits. Three heterotrimers associate to form the active enzyme. Requires Ni cation as cofactor. Post-translationally, carboxylation allows a single lysine to coordinate two nickel ions.

It localises to the cytoplasm. The catalysed reaction is urea + 2 H2O + H(+) = hydrogencarbonate + 2 NH4(+). It participates in nitrogen metabolism; urea degradation; CO(2) and NH(3) from urea (urease route): step 1/1. The sequence is that of Urease subunit alpha from Albidiferax ferrireducens (strain ATCC BAA-621 / DSM 15236 / T118) (Rhodoferax ferrireducens).